A 105-amino-acid polypeptide reads, in one-letter code: Protein SMALL AUXIN UP-REGULATED RNA 16 (105 aa).

This sequence belongs to the ARG7 family. In terms of tissue distribution, expressed in etiolated hypocotyls, cotyledons, leaves, flowers and siliques.

The protein resides in the cell membrane. Its function is as follows. Provide a mechanistic link between auxin and plasma membrane H(+)-ATPases (PM H(+)-ATPases, e.g. AHA1 and AHA2), and triggers PM H(+)-ATPases activity by promoting phosphorylation of their C-terminal autoinhibitory domain as a result of PP2C-D subfamily of type 2C phosphatases inhibition, thus leading to the acidification of the apoplast and the facilitation of solutes and water uptake to drive cell expansion. Triggers plant growth probably by promoting cell elongation. Regulates branch angles and bending. This chain is Protein SMALL AUXIN UP-REGULATED RNA 16, found in Arabidopsis thaliana (Mouse-ear cress).